A 632-amino-acid chain; its full sequence is Golgin subfamily A member 8N (632 aa).

The interval 1 to 76 is disordered; sequence MAEETQHNKL…TSSATLKDLE (76 aa). A compositionally biased stretch (polar residues) spans 38–50; that stretch reads TNGSIPETATSGG. Coiled coils occupy residues 85-150 and 209-421; these read VLDS…TDLY and ELEQ…SLMA. Disordered regions lie at residues 423 to 445, 505 to 524, and 552 to 573; these read PGEG…PMPS, DAAL…DEGE, and NSAD…ADKH. Gly residues predominate over residues 508–520; the sequence is LGGGHHQAGAQGG.

The protein belongs to the GOLGA8 family.

The protein is Golgin subfamily A member 8N of Homo sapiens (Human).